Reading from the N-terminus, the 1068-residue chain is Self-sufficient cytochrome P450 monooxygenase CYP505U2 (1068 aa).

Residue Cys408 participates in heme binding. Residues 464–498 (TTAGMVPESVQSLRQAQKSGKPGNSKSSANESMVG) form a disordered region. The segment covering 472–498 (SVQSLRQAQKSGKPGNSKSSANESMVG) has biased composition (polar residues). The region spanning 505–646 (VSIFYGSNSG…DLEKWEESIL (142 aa)) is the Flavodoxin-like domain. FMN contacts are provided by residues 511-515 (SNSGS) and 590-622 (VFGC…QRVA). Residues 679-909 (KEFLEATVTS…RRSNPAFHPP (231 aa)) enclose the FAD-binding FR-type domain.

The protein in the N-terminal section; belongs to the cytochrome P450 family. FAD is required as a cofactor. FMN serves as cofactor. It depends on heme as a cofactor.

It catalyses the reaction 2 oxidized [cytochrome P450] + NADPH = 2 reduced [cytochrome P450] + NADP(+) + H(+). It carries out the reaction an organic molecule + reduced [NADPH--hemoprotein reductase] + O2 = an alcohol + oxidized [NADPH--hemoprotein reductase] + H2O + H(+). The catalysed reaction is dodecanoate + reduced [NADPH--hemoprotein reductase] + O2 = 3-hydroxydodecanoate + oxidized [NADPH--hemoprotein reductase] + H2O + H(+). The enzyme catalyses dodecanoate + reduced [NADPH--hemoprotein reductase] + O2 = 7-hydroxydodecanoate + oxidized [NADPH--hemoprotein reductase] + H2O + H(+). It catalyses the reaction dodecan-1-ol + reduced [NADPH--hemoprotein reductase] + O2 = 1,4-dodecanediol + oxidized [NADPH--hemoprotein reductase] + H2O + H(+). It carries out the reaction dodecan-1-ol + reduced [NADPH--hemoprotein reductase] + O2 = 1,3-dodecanediol + oxidized [NADPH--hemoprotein reductase] + H2O + H(+). In terms of biological role, self-sufficient cytochrome P450 monooxygenase that catalyzes the regioselective in-chain hydroxylation of alkanes, fatty alcohols, and fatty acids. Preferentially hydroxylates 1-dodecanol at C3 and C4 (positions omega-8 and omega-9). It is very likely that CYP505U2 prefers dodecanol, and probably other fatty alcohols, over fatty acids as substrates. Does not show any significant activity toward tetradecanoic acid. The protein is Self-sufficient cytochrome P450 monooxygenase CYP505U2 of Exserohilum turcicum (strain 28A) (Northern leaf blight fungus).